A 272-amino-acid polypeptide reads, in one-letter code: Replication-associated protein A (272 aa).

The CRESS-DNA virus Rep endonuclease domain occupies 11-114 (SHRNANTFLT…PLAVFERGTF (104 aa)). Residues 18–21 (FLTY) carry the RCR-1 motif. 3 residues coordinate a divalent metal cation: Glu52, His60, and His62. The RCR-2 motif lies at 60–62 (HLH). Tyr100 (for DNA cleavage activity) is an active-site residue. Residues 100-103 (YILK) carry the RCR-3 motif. Glu104 is an a divalent metal cation binding site. The segment at 175–187 (SANKLFPEIQEEF) is oligomerization. Residues 198–202 (LLCNE) are binding to RBR1. The interval 221-230 (MLLQPTCYTL) is transactivation. The tract at residues 245 to 272 (SHQMKDQESRASTSSAQQEPENLLGPEA) is disordered. Residues 254–264 (RASTSSAQQEP) are compositionally biased toward polar residues.

It belongs to the geminiviridae Rep protein family. Homooligomer. Interacts with host retinoblastoma-related protein 1 (RBR1), and may thereby deregulate the host cell cycle. Part of the C- and V-complexes which are RepA-Rep-DNA complexes involved in the c-sense and v-sense transcription. It depends on Mg(2+) as a cofactor. Mn(2+) serves as cofactor.

The protein resides in the host nucleus. Its subcellular location is the host cytoplasm. In terms of biological role, implicated in enhancement of V-sense gene expression. Acts a an inhibitor of C-sense gene transcription. In Maize streak virus genotype A (isolate Nigeria) (MSV), this protein is Replication-associated protein A.